Consider the following 322-residue polypeptide: NAD(P)H-dependent D-xylose reductase (322 aa).

Tyrosine 52 (proton donor) is an active-site residue. Histidine 114 serves as a coordination point for substrate. NAD(+)-binding positions include 169-170, 218-227, and 274-284; these read SN, SSFGPQSFVE, and KSNLPERLVQN.

It belongs to the aldo/keto reductase family. As to quaternary structure, homodimer.

The enzyme catalyses xylitol + NAD(+) = D-xylose + NADH + H(+). It catalyses the reaction xylitol + NADP(+) = D-xylose + NADPH + H(+). It functions in the pathway carbohydrate metabolism; D-xylose degradation. Its function is as follows. Reduces D-xylose into xylitol. Has a preference for NADPH, but can also utilize NADH as cosubstrate. The sequence is that of NAD(P)H-dependent D-xylose reductase (XYL1) from Candida tenuis (Yeast).